A 169-amino-acid polypeptide reads, in one-letter code: Transcription antitermination protein NusB (169 aa).

The protein belongs to the NusB family.

Its function is as follows. Involved in transcription antitermination. Required for transcription of ribosomal RNA (rRNA) genes. Binds specifically to the boxA antiterminator sequence of the ribosomal RNA (rrn) operons. The chain is Transcription antitermination protein NusB from Deinococcus geothermalis (strain DSM 11300 / CIP 105573 / AG-3a).